The following is a 150-amino-acid chain: Flagellar assembly factor FliW (150 aa).

The protein belongs to the FliW family. Interacts with translational regulator CsrA and flagellin(s).

The protein resides in the cytoplasm. In terms of biological role, acts as an anti-CsrA protein, binds CsrA and prevents it from repressing translation of its target genes, one of which is flagellin. Binds to flagellin and participates in the assembly of the flagellum. The polypeptide is Flagellar assembly factor FliW (Leptospira borgpetersenii serovar Hardjo-bovis (strain JB197)).